The sequence spans 468 residues: Ribosomal protein uS12 methylthiotransferase RimO (468 aa).

The 115-residue stretch at 16 to 130 (NKIHFISLGC…ILSAIESRES (115 aa)) folds into the MTTase N-terminal domain. [4Fe-4S] cluster is bound by residues Cys25, Cys61, Cys93, Cys164, Cys168, and Cys171. In terms of domain architecture, Radical SAM core spans 150-382 (STPKHYAYLK…SQIQKRNVDK (233 aa)). The 71-residue stretch at 385–455 (QKLIGEKIEA…GYDLVGRVVK (71 aa)) folds into the TRAM domain.

This sequence belongs to the methylthiotransferase family. RimO subfamily. [4Fe-4S] cluster is required as a cofactor.

Its subcellular location is the cytoplasm. It catalyses the reaction L-aspartate(89)-[ribosomal protein uS12]-hydrogen + (sulfur carrier)-SH + AH2 + 2 S-adenosyl-L-methionine = 3-methylsulfanyl-L-aspartate(89)-[ribosomal protein uS12]-hydrogen + (sulfur carrier)-H + 5'-deoxyadenosine + L-methionine + A + S-adenosyl-L-homocysteine + 2 H(+). Catalyzes the methylthiolation of an aspartic acid residue of ribosomal protein uS12. The protein is Ribosomal protein uS12 methylthiotransferase RimO of Chlamydia pneumoniae (Chlamydophila pneumoniae).